The chain runs to 93 residues: Small ribosomal subunit protein uS19 (93 aa).

It belongs to the universal ribosomal protein uS19 family.

Functionally, protein S19 forms a complex with S13 that binds strongly to the 16S ribosomal RNA. This Thermus thermophilus (strain ATCC BAA-163 / DSM 7039 / HB27) protein is Small ribosomal subunit protein uS19 (rpsS).